We begin with the raw amino-acid sequence, 957 residues long: Leucine--tRNA ligase (957 aa).

The 'HIGH' region signature appears at Pro70–His81. Positions Lys727 to Ser731 match the 'KMSKS' region motif. Lys730 is a binding site for ATP.

This sequence belongs to the class-I aminoacyl-tRNA synthetase family.

It localises to the cytoplasm. It catalyses the reaction tRNA(Leu) + L-leucine + ATP = L-leucyl-tRNA(Leu) + AMP + diphosphate. The protein is Leucine--tRNA ligase of Corynebacterium efficiens (strain DSM 44549 / YS-314 / AJ 12310 / JCM 11189 / NBRC 100395).